The chain runs to 253 residues: Imidazole glycerol phosphate synthase subunit HisF (253 aa).

Catalysis depends on residues aspartate 11 and aspartate 130.

It belongs to the HisA/HisF family. In terms of assembly, heterodimer of HisH and HisF.

The protein resides in the cytoplasm. It carries out the reaction 5-[(5-phospho-1-deoxy-D-ribulos-1-ylimino)methylamino]-1-(5-phospho-beta-D-ribosyl)imidazole-4-carboxamide + L-glutamine = D-erythro-1-(imidazol-4-yl)glycerol 3-phosphate + 5-amino-1-(5-phospho-beta-D-ribosyl)imidazole-4-carboxamide + L-glutamate + H(+). It functions in the pathway amino-acid biosynthesis; L-histidine biosynthesis; L-histidine from 5-phospho-alpha-D-ribose 1-diphosphate: step 5/9. In terms of biological role, IGPS catalyzes the conversion of PRFAR and glutamine to IGP, AICAR and glutamate. The HisF subunit catalyzes the cyclization activity that produces IGP and AICAR from PRFAR using the ammonia provided by the HisH subunit. The polypeptide is Imidazole glycerol phosphate synthase subunit HisF (Paracoccus denitrificans (strain Pd 1222)).